We begin with the raw amino-acid sequence, 304 residues long: N-carbamoyl-D-amino acid hydrolase (304 aa).

Residues 5–276 (MILAVGQQGP…DEVITAAVDL (272 aa)) form the CN hydrolase domain. Catalysis depends on residues Glu-47, Lys-127, and Cys-172.

As to quaternary structure, homotetramer.

It catalyses the reaction an N-carbamoyl-D-amino acid + H2O + 2 H(+) = a D-alpha-amino acid + NH4(+) + CO2. Its function is as follows. The enzyme catalyzes the hydrolysis of N-carbamoyl-D-amino acids to the corresponding which are useful intermediates in the preparation of beta-lactam antibiotics. Industrial production of beta-lactam antibiotics is now being developed using this enzyme. This chain is N-carbamoyl-D-amino acid hydrolase, found in Rhizobium radiobacter (Agrobacterium tumefaciens).